A 327-amino-acid chain; its full sequence is Olfactory receptor 9G4 (327 aa).

Residues 1-43 lie on the Extracellular side of the membrane; the sequence is MIFPSHDSQAFTSVDMEVGNCTILTEFILLGFSADSQWQPILF. N20 carries an N-linked (GlcNAc...) asparagine glycan. The chain crosses the membrane as a helical span at residues 44-64; the sequence is GVFLMLYLITLSGNMTLVILI. Over 65–71 the chain is Cytoplasmic; that stretch reads RTDSHLH. The chain crosses the membrane as a helical span at residues 72 to 92; it reads TPMYFFIGNLSFLDFWYTSVY. At 93–113 the chain is on the extracellular side; the sequence is TPKILASCVSEDKRISLAGCG. C112 and C194 are disulfide-bonded. Residues 114–134 form a helical membrane-spanning segment; it reads AQLFFSCVVAYTECYLLAAMA. At 135-152 the chain is on the cytoplasmic side; it reads YDRHAAICNPLLYSGTMS. A helical membrane pass occupies residues 153–173; sequence TALCTGLVAGSYIGGFLNAIA. The Extracellular segment spans residues 174–212; it reads HTANTFRLHFCGKNIIDHFFCDAPPLVKMSCTNTRVYEK. The chain crosses the membrane as a helical span at residues 213–233; that stretch reads VLLGVVGFTVLSSILAILISY. Residues 234-252 lie on the Cytoplasmic side of the membrane; sequence VNILLAILRIHSASGRHKA. Residues 253–273 form a helical membrane-spanning segment; the sequence is FSTCASHLISVMLFYGSLLFM. At 274–286 the chain is on the extracellular side; the sequence is YSRPSSTYSLERD. The chain crosses the membrane as a helical span at residues 287–307; the sequence is KVAALFYTVINPLLNPLIYSL. Over 308 to 327 the chain is Cytoplasmic; it reads RNKDIKEAFRKATQTIQPQT.

It belongs to the G-protein coupled receptor 1 family.

It is found in the cell membrane. Its function is as follows. Odorant receptor. This is Olfactory receptor 9G4 (OR9G4) from Homo sapiens (Human).